Here is a 338-residue protein sequence, read N- to C-terminus: Heat-inducible transcription repressor HrcA (338 aa).

It belongs to the HrcA family.

Its function is as follows. Negative regulator of class I heat shock genes (grpE-dnaK-dnaJ and groELS operons). Prevents heat-shock induction of these operons. The protein is Heat-inducible transcription repressor HrcA of Nitrosomonas eutropha (strain DSM 101675 / C91 / Nm57).